The sequence spans 370 residues: Death-associated protein kinase 2 (370 aa).

A Protein kinase domain is found at 23-285; sequence YDIGEELGSG…IQEALRHPWI (263 aa). Residues 29 to 37 and K52 each bind ATP; that span reads LGSGQFAIV. D149 serves as the catalytic Proton acceptor. Residues 287–354 form a calmodulin-binding region; it reads PVDTQQAMVR…RNCESDTEEN (68 aa). The autoinhibitory domain stretch occupies residues 292–301; sequence QAMVRRESVV. S299 carries the phosphoserine modification. Position 318 is a phosphoserine; by autocatalysis (S318). S349 bears the Phosphoserine mark. The residue at position 369 (T369) is a Phosphothreonine.

This sequence belongs to the protein kinase superfamily. CAMK Ser/Thr protein kinase family. DAP kinase subfamily. In terms of assembly, homodimer in its autoinhibited state. Active as monomer. Interacts with 14-3-3 proteins YWHAB, YWHAE, YWHAG, YWHAH, YWHAQ, YWHAZ and SFN; the interaction requires DAPK2 phosphorylation at Thr-369 and suppresses DAPK2 kinase activity and DAPK2-induced apoptosis. The cofactor is Mg(2+). Autophosphorylation at Ser-318 inhibits its catalytic activity. Dephosphorylated at Ser-318 in response to activated Fas and TNF-alpha receptors. Expressed in peritubular interstitial cells of the renal cortex. Isoform 1 is found in the adult brain while isoform 2 is expressed in brains of embryos and young mice (at protein level).

The protein localises to the cytoplasm. Its subcellular location is the cytoplasmic vesicle. The protein resides in the autophagosome lumen. It carries out the reaction L-seryl-[protein] + ATP = O-phospho-L-seryl-[protein] + ADP + H(+). The enzyme catalyses L-threonyl-[protein] + ATP = O-phospho-L-threonyl-[protein] + ADP + H(+). Its activity is regulated as follows. Activated by Ca(2+)/calmodulin. Regulated by a double locking mechanism, involving autophosphorylation at Ser-318, calmodulin binding, and dimerization. In the inactive state, Ser-318 is phosphorylated, and the kinase is dimeric. Activation involves: dephosphorylation at Ser-318, release-of-autoinhibition mechanism where calmodulin binding induces a conformational change that relieves the steric block of the active site by the autoinhibitory domain, and generation of the monomeric active form of the kinase. In terms of biological role, calcium/calmodulin-dependent serine/threonine kinase involved in multiple cellular signaling pathways that trigger cell survival, apoptosis, and autophagy. Capable of regulating both type I apoptotic and type II autophagic cell death signals. The former involves caspase activation, chromatin and mitochondrial condensation while the latter involves caspase-independent cell death in conjunction with accumulation of mature autophagic vesicles, plasma membrane blebs, and nuclear condensation without DNA degradation. Mediator of anoikis and a suppressor of beta-catenin-dependent anchorage-independent growth of malignant epithelial cells. May play a role in granulocytic maturation. Regulates granulocytes motility by controlling cell spreading and polarization. In Mus musculus (Mouse), this protein is Death-associated protein kinase 2 (Dapk2).